A 430-amino-acid chain; its full sequence is 3-phosphoshikimate 1-carboxyvinyltransferase (430 aa).

3-phosphoshikimate contacts are provided by Lys-33, Ser-34, and Arg-38. Lys-33 contributes to the phosphoenolpyruvate binding site. Phosphoenolpyruvate-binding residues include Gly-101 and Arg-129. Ser-172, Ser-173, Gln-174, Ser-201, Glu-319, and His-346 together coordinate 3-phosphoshikimate. Gln-174 is a phosphoenolpyruvate binding site. Glu-319 (proton acceptor) is an active-site residue. Residues Arg-350, Arg-391, and Lys-416 each coordinate phosphoenolpyruvate.

It belongs to the EPSP synthase family. As to quaternary structure, monomer.

The protein localises to the cytoplasm. It carries out the reaction 3-phosphoshikimate + phosphoenolpyruvate = 5-O-(1-carboxyvinyl)-3-phosphoshikimate + phosphate. The protein operates within metabolic intermediate biosynthesis; chorismate biosynthesis; chorismate from D-erythrose 4-phosphate and phosphoenolpyruvate: step 6/7. Functionally, catalyzes the transfer of the enolpyruvyl moiety of phosphoenolpyruvate (PEP) to the 5-hydroxyl of shikimate-3-phosphate (S3P) to produce enolpyruvyl shikimate-3-phosphate and inorganic phosphate. The sequence is that of 3-phosphoshikimate 1-carboxyvinyltransferase from Corynebacterium glutamicum (strain ATCC 13032 / DSM 20300 / JCM 1318 / BCRC 11384 / CCUG 27702 / LMG 3730 / NBRC 12168 / NCIMB 10025 / NRRL B-2784 / 534).